The chain runs to 437 residues: GTPase Era, mitochondrial (437 aa).

The N-terminal 20 residues, 1-20, are a transit peptide targeting the mitochondrion; that stretch reads MAAPRRYCAGLVRALLGARQ. The region spanning 112 to 330 is the Era-type G domain; the sequence is RVLRVVLLGA…QYLLTQAQPG (219 aa). Positions 120–127 are G1; that stretch reads GAPNAGKS. 120–127 is a binding site for GTP; sequence GAPNAGKS. Residues 146-150 are G2; that stretch reads HTTRC. The G3 stretch occupies residues 167–170; it reads DTPG. 167 to 171 is a binding site for GTP; it reads DTPGI. Phosphoserine is present on serine 173. 236–239 is a GTP binding site; that stretch reads NKVD. Positions 236–239 are G4; sequence NKVD. A disordered region spans residues 270-292; sequence LRSRSSTHCPGPETEGPNAHSVR. The tract at residues 308–310 is G5; it reads LSA. A KH type-2 domain is found at 360–437; the sequence is LPEEVPYGVQ…LIRLSVKLLK (78 aa).

It belongs to the TRAFAC class TrmE-Era-EngA-EngB-Septin-like GTPase superfamily. Era GTPase family.

It is found in the mitochondrion matrix. The protein resides in the mitochondrion inner membrane. In terms of biological role, probable GTPase that plays a role in the mitochondrial ribosomal small subunit assembly. Specifically binds the 12S mitochondrial rRNA (12S mt-rRNA) to a 33 nucleotide section delineating the 3' terminal stem-loop region. May act as a chaperone that protects the 12S mt-rRNA on the 28S mitoribosomal subunit during ribosomal small subunit assembly. This Mus musculus (Mouse) protein is GTPase Era, mitochondrial (Eral1).